The chain runs to 199 residues: Ras-related protein Rab-7b (199 aa).

GTP is bound by residues 15–22 (GALGVGKT), 34–40 (FEEYQTT), 63–67 (DTGGQ), 124–127 (NKID), and 154–155 (AK). 2 short sequence motifs (switch) span residues 28 to 41 (YVHK…QTTL) and 67 to 82 (QERF…KGSD). S186 is subject to Phosphoserine. 2 S-geranylgeranyl cysteine lipidation sites follow: C198 and C199.

This sequence belongs to the small GTPase superfamily. Rab family.

It is found in the late endosome. The protein localises to the lysosome. Its subcellular location is the golgi apparatus. The protein resides in the trans-Golgi network. It localises to the cytoplasmic vesicle. It is found in the phagosome. The protein localises to the phagosome membrane. In terms of biological role, controls vesicular trafficking from endosomes to the trans-Golgi network (TGN). Acts as a negative regulator of TLR9 signaling and can suppress TLR9-triggered TNFA, IL6, and IFNB production in macrophages by promoting TLR9 lysosomal degradation. Also negatively regulates TLR4 signaling in macrophages by promoting lysosomal degradation of TLR4. Promotes megakaryocytic differentiation by increasing NF-kappa-B-dependent IL6 production and subsequently enhancing the association of STAT3 with GATA1. Not involved in the regulation of the EGF- and EGFR degradation pathway. The protein is Ras-related protein Rab-7b (Rab7b) of Mus musculus (Mouse).